A 205-amino-acid chain; its full sequence is Ribosomal RNA large subunit methyltransferase E (205 aa).

Gly-60, Trp-62, Asp-80, Asp-96, and Asp-121 together coordinate S-adenosyl-L-methionine. The active-site Proton acceptor is Lys-161.

This sequence belongs to the class I-like SAM-binding methyltransferase superfamily. RNA methyltransferase RlmE family.

The protein localises to the cytoplasm. It carries out the reaction uridine(2552) in 23S rRNA + S-adenosyl-L-methionine = 2'-O-methyluridine(2552) in 23S rRNA + S-adenosyl-L-homocysteine + H(+). In terms of biological role, specifically methylates the uridine in position 2552 of 23S rRNA at the 2'-O position of the ribose in the fully assembled 50S ribosomal subunit. The protein is Ribosomal RNA large subunit methyltransferase E of Dechloromonas aromatica (strain RCB).